The primary structure comprises 131 residues: Global transcriptional regulator Spx (131 aa).

A disulfide bridge links cysteine 10 with cysteine 13.

This sequence belongs to the ArsC family. Spx subfamily. As to quaternary structure, interacts with the C-terminal domain of the alpha subunit of the RNAP.

The protein localises to the cytoplasm. Functionally, global transcriptional regulator that plays a key role in stress response and exerts either positive or negative regulation of genes. Acts by interacting with the C-terminal domain of the alpha subunit of the RNA polymerase (RNAP). This interaction can enhance binding of RNAP to the promoter region of target genes and stimulate their transcription, or block interaction of RNAP with activator. The protein is Global transcriptional regulator Spx of Listeria innocua serovar 6a (strain ATCC BAA-680 / CLIP 11262).